A 413-amino-acid chain; its full sequence is Probable N-acetyltransferase HLS1-like (413 aa).

Residues valine 5–asparagine 187 enclose the N-acetyltransferase domain.

Belongs to the acetyltransferase family.

The protein is Probable N-acetyltransferase HLS1-like of Arabidopsis thaliana (Mouse-ear cress).